Reading from the N-terminus, the 852-residue chain is Cytochrome P450 monooxygenase mpaDE (852 aa).

The Lumenal portion of the chain corresponds to 1 to 6; that stretch reads MDYLII. A helical membrane pass occupies residues 7–29; that stretch reads IRITAVAVVLYLTRYVCCLYLHL. Residues 30-852 are Cytoplasmic-facing; it reads QDVPGPLFAK…DLEDAMEGTK (823 aa). Cys-448 lines the heme pocket.

It belongs to the cytochrome P450 family. Heme is required as a cofactor.

It is found in the endoplasmic reticulum membrane. The catalysed reaction is 5-methylorsellinate + reduced [NADPH--hemoprotein reductase] + O2 = 4,6-dihydroxy-2-(hydroxymethyl)-3-methylbenzoate + oxidized [NADPH--hemoprotein reductase] + H2O + H(+). It carries out the reaction 4,6-dihydroxy-2-(hydroxymethyl)-3-methylbenzoate + H(+) = 5,7-dihydroxy-4-methylphthalide + H2O. It functions in the pathway secondary metabolite biosynthesis; terpenoid biosynthesis. Functionally, cytochrome P450 monooxygenase; part of the gene cluster that mediates the biosynthesis of mycophenolic acid (MPA), the first isolated antibiotic natural product in the world obtained from a culture of Penicillium brevicompactum in 1893. MpaDE is an endoplasmic reticulum-bound enzyme that catalyzes the conversion of 5-methylorsellinic acid (5MOA) into the phthalide compound 5,7-dihydroxy-4,6-dimethylphthalide (DHMP). MpaDE first catalyzes hydroxylation of 5-MOA to 4,6-dihydroxy-2-(hydroxymethyl)-3-methylbenzoic acid (DHMB), and then acts as a lactone synthase that catalyzes the ring closure to convert DHMB into DHMP. The first step of the pathway is the synthesis of 5-methylorsellinic acid (5MOA) by the cytosolic polyketide synthase mpaC. 5MOA is then converted to the phthalide compound 5,7-dihydroxy-4,6-dimethylphthalide (DHMP) by the endoplasmic reticulum-bound cytochrome P450 monooxygenase mpaDE. MpaDE first catalyzes hydroxylation of 5-MOA to 4,6-dihydroxy-2-(hydroxymethyl)-3-methylbenzoic acid (DHMB). MpaDE then acts as a lactone synthase that catalyzes the ring closure to convert DHMB into DHMP. The next step is the prenylation of DHMP by the Golgi apparatus-associated prenyltransferase mpaA to yield farnesyl-DHMP (FDHMP). The ER-bound oxygenase mpaB then mediates the oxidative cleavage the C19-C20 double bond in FDHMP to yield FDHMP-3C via a mycophenolic aldehyde intermediate. The O-methyltransferase mpaG catalyzes the methylation of FDHMP-3C to yield MFDHMP-3C. After the cytosolic methylation of FDHMP-3C, MFDHMP-3C enters into peroxisomes probably via free diffusion due to its low molecular weight. Upon a peroxisomal CoA ligation reaction, catalyzed by a beta-oxidation component enzyme acyl-CoA ligase ACL891, MFDHMP-3C-CoA would then be restricted to peroxisomes for the following beta-oxidation pathway steps. The peroxisomal beta-oxidation machinery than converts MFDHMP-3C-CoA into MPA_CoA, via a beta-oxidation chain-shortening process. Finally mpaH acts as a peroxisomal acyl-CoA hydrolase with high substrate specificity toward MPA-CoA to release the final product MPA. This is Cytochrome P450 monooxygenase mpaDE from Penicillium roqueforti (strain FM164).